Consider the following 580-residue polypeptide: MNLFTEIRTLVTAELGAMTEAGDLPAGLDLSAVAVEPPRDPAHGDMSTNAAMVLAKPSGKPPRTIAEALATRLAADPRISSAEVAGPGFLNLRLRPAVWQGMVATILQAGDTYGRSTIGAGQKVNVEFVSANPTGPMHVGHVRGAVVGDALARLLAYAGWNVTREYYINDGGAQVDVLARSAFERYREAHGLEPEIREGLYPGDYLIPVGEALKAKYGDSLLDKGEQHWLTEVREFATEMMMQMIREDLAALGVEMDVYSSEKALYGTGKIEAALDRLKEMDLIYEGVLEPPKGKTPEDWEPREQTLFRSTAHGDDVDRPVKKSDGSWTYFAPDIAYHYDKVTRGFDQLIDIFGADHGGYVKRMKAAVAALSAGRVPLDIKLIQLVKLWKNGEPFKMSKRAGTYVTLRDVVEQVGTDVTRFVMLTRKNDATLDFDFDKVLEQSKENPVFYVQYANARINSVLRKAREQGMDVSDATLATADLDRLDHPAEIALIAKLAEWPRLVEIAARTNEPHRVAFYLHELASELHGLWNRGNDEAGLRFLQDDPVVSQAKIALARAVGVVICAGLGILGVTPVEEMR.

The 'HIGH' region motif lies at 131 to 141 (ANPTGPMHVGH).

The protein belongs to the class-I aminoacyl-tRNA synthetase family. As to quaternary structure, monomer.

The protein resides in the cytoplasm. It carries out the reaction tRNA(Arg) + L-arginine + ATP = L-arginyl-tRNA(Arg) + AMP + diphosphate. This Cereibacter sphaeroides (strain ATCC 17023 / DSM 158 / JCM 6121 / CCUG 31486 / LMG 2827 / NBRC 12203 / NCIMB 8253 / ATH 2.4.1.) (Rhodobacter sphaeroides) protein is Arginine--tRNA ligase.